We begin with the raw amino-acid sequence, 423 residues long: Ankyrin repeat and SAM domain-containing protein 4B (423 aa).

The tract at residues 1 to 251 (MSTRYHQAAS…PKDFKEKLHF (251 aa)) is mediates localization to microvilli. 3 ANK repeats span residues 31 to 60 (DGMT…DPDK), 64 to 93 (WGNT…NIFA), and 97 to 126 (DLKS…VQNT). Positions 130-169 (KRVTRLKEQALKNARKQMKECERLQERHQNKMARTYSKED) form a coiled coil. Disordered regions lie at residues 158 to 181 (QNKM…STLS), 207 to 227 (KSKK…SGQR), and 303 to 335 (QRQG…AGDL). A compositionally biased stretch (low complexity) spans 171–181 (GTISSSHSTLS). Basic and acidic residues predominate over residues 207–224 (KSKKNKDTTEQLEKDGRS). The mediates interaction with MYO7B stretch occupies residues 253-352 (VEEDDDVQHE…EWEEDAVDAT (100 aa)). Residues 301–335 (LFQRQGAAGTVEEEEEEEEEEEEEKREANGTAGDL) adopt a coiled-coil conformation. Residues 311 to 324 (VEEEEEEEEEEEEE) are compositionally biased toward acidic residues. An SAM domain is found at 357–409 (FLQSQHLEEFLPIFMREQIDLEALLLCSDEDLQNIHMQLGPRKKVLSAIDKRK). The short motif at 421–423 (TSL) is the PDZ-binding; mediates interaction with USH1C element.

As to quaternary structure, part of the IMAC/intermicrovillar adhesion complex/intermicrovillar tip-link complex composed of ANKS4B, MYO7B, USH1C, CDHR2 and CDHR5. Interacts with USH1C; the interaction is direct and is required for ANKS4B localization to the tip of microvilli. Interacts with MYO7B; the interaction is direct. May interact with HSPA5. Cochlea, kidney, lung, liver, pancreas, salivary gland and small intestine (at protein level). Expressed in kidney, small intestine, pancreas, liver and colon. Not detected in heart, spleen and brain.

Its subcellular location is the cell projection. The protein resides in the microvillus. Functionally, as part of the intermicrovillar adhesion complex/IMAC plays a role in epithelial brush border differentiation, controlling microvilli organization and length. Plays a role in assembly of the complex. May play a role in cellular response to endoplasmic reticulum stress. In Mus musculus (Mouse), this protein is Ankyrin repeat and SAM domain-containing protein 4B.